Reading from the N-terminus, the 435-residue chain is Eukaryotic translation initiation factor 3 subunit E (435 aa).

The PCI domain occupies 219–392 (FFNHAKGRDL…GHVVMGTQPL (174 aa)).

The protein belongs to the eIF-3 subunit E family. In terms of assembly, component of the eukaryotic translation initiation factor 3 (eIF-3) complex.

The protein resides in the cytoplasm. Its function is as follows. Component of the eukaryotic translation initiation factor 3 (eIF-3) complex, which is involved in protein synthesis of a specialized repertoire of mRNAs and, together with other initiation factors, stimulates binding of mRNA and methionyl-tRNAi to the 40S ribosome. The eIF-3 complex specifically targets and initiates translation of a subset of mRNAs involved in cell proliferation. The sequence is that of Eukaryotic translation initiation factor 3 subunit E (eIF3-S6) from Aedes aegypti (Yellowfever mosquito).